The following is a 267-amino-acid chain: Glutamate 5-kinase (267 aa).

ATP is bound at residue K17. S57, D144, and N156 together coordinate substrate. ATP contacts are provided by residues 176–177 (SD) and 218–224 (TGGMATK).

Belongs to the glutamate 5-kinase family.

It localises to the cytoplasm. It carries out the reaction L-glutamate + ATP = L-glutamyl 5-phosphate + ADP. It functions in the pathway amino-acid biosynthesis; L-proline biosynthesis; L-glutamate 5-semialdehyde from L-glutamate: step 1/2. In terms of biological role, catalyzes the transfer of a phosphate group to glutamate to form L-glutamate 5-phosphate. The protein is Glutamate 5-kinase of Clostridium acetobutylicum (strain ATCC 824 / DSM 792 / JCM 1419 / IAM 19013 / LMG 5710 / NBRC 13948 / NRRL B-527 / VKM B-1787 / 2291 / W).